The following is a 349-amino-acid chain: uncharacterized protein (349 aa).

An N-terminal signal peptide occupies residues 1–26 (MQSHAGGSRAPLGLLLICLCLPGLFA). Disordered stretches follow at residues 30–113 (GAPE…QGMA) and 322–349 (YPAG…GITP). Residues 39 to 52 (HSGQPSFTSLLNPG) are compositionally biased toward polar residues. A compositionally biased stretch (pro residues) spans 90-101 (NGPPFWGPPPME).

Binds to numerous extracellular matrix proteins.

It is found in the secreted. The protein localises to the extracellular space. Its subcellular location is the extracellular matrix. This is an uncharacterized protein from Mus musculus (Mouse).